The chain runs to 485 residues: Alginate biosynthesis protein AlgA (485 aa).

It belongs to the mannose-6-phosphate isomerase type 2 family. Monomer. Co(2+) serves as cofactor.

The catalysed reaction is D-mannose 6-phosphate = D-fructose 6-phosphate. The enzyme catalyses alpha-D-mannose 1-phosphate + GTP + H(+) = GDP-alpha-D-mannose + diphosphate. The protein operates within nucleotide-sugar biosynthesis; GDP-alpha-D-mannose biosynthesis; GDP-alpha-D-mannose from alpha-D-mannose 1-phosphate (GTP route): step 1/1. Its pathway is nucleotide-sugar biosynthesis; GDP-alpha-D-mannose biosynthesis; alpha-D-mannose 1-phosphate from D-fructose 6-phosphate: step 1/2. Functionally, produces a precursor for alginate polymerization. The alginate layer provides a protective barrier against host immune defenses and antibiotics. This Pseudomonas putida (strain ATCC 47054 / DSM 6125 / CFBP 8728 / NCIMB 11950 / KT2440) protein is Alginate biosynthesis protein AlgA (algA).